Here is a 93-residue protein sequence, read N- to C-terminus: Small ribosomal subunit protein uS19 (93 aa).

Belongs to the universal ribosomal protein uS19 family.

Its function is as follows. Protein S19 forms a complex with S13 that binds strongly to the 16S ribosomal RNA. This chain is Small ribosomal subunit protein uS19, found in Phytoplasma australiense.